The sequence spans 132 residues: Interleukin-5 (132 aa).

Residues 1–17 form the signal peptide; that stretch reads MRLPLQLSILTLAWVWA. 3 N-linked (GlcNAc...) asparagine glycosylation sites follow: Asn-45, Asn-74, and Asn-88.

The protein belongs to the IL-5 family. As to quaternary structure, homodimer; disulfide-linked. Interacts with IL5RA. Interacts with CSF2RB.

It localises to the secreted. Homodimeric cytokine expressed predominantly by T-lymphocytes and NK cells that plays an important role in the survival, differentiation, and chemotaxis of eosinophils. Also acts on activated and resting B-cells to induce immunoglobulin production, growth, and differentiation. Mechanistically, exerts its biological effects through a receptor composed of IL5RA subunit and the cytokine receptor common subunit beta/CSF2RB. Binding to the receptor leads to activation of various kinases including LYN, SYK and JAK2 and thereby propagates signals through the RAS-MAPK and JAK-STAT5 pathways respectively. This Meriones unguiculatus (Mongolian jird) protein is Interleukin-5 (IL5).